Reading from the N-terminus, the 320-residue chain is Malate dehydrogenase (320 aa).

NAD(+)-binding positions include 10 to 15 (GAGMIG) and Asp-34. Residues Arg-83 and Arg-89 each coordinate substrate. NAD(+) is bound by residues Asn-96 and 119-121 (ITN). 2 residues coordinate substrate: Asn-121 and Arg-152. His-176 serves as the catalytic Proton acceptor.

It belongs to the LDH/MDH superfamily. MDH type 3 family.

It catalyses the reaction (S)-malate + NAD(+) = oxaloacetate + NADH + H(+). In terms of biological role, catalyzes the reversible oxidation of malate to oxaloacetate. The sequence is that of Malate dehydrogenase from Caulobacter sp. (strain K31).